The chain runs to 267 residues: MAVTPYVDTSRLDGKVALVTGSGRGIGAAMAIHLANRGAKVVVNYANSVEAANKVVDEIKSRGGEAIALQADVGEVSQTTKLMDDAVAHFGQLDIVCSNSGVVSFGHLKDVTEEEYDRVFRINTRGQFFVAREAYKHLSVGGRIIMMGSITGQAKGVPKHAVYSASKGAIETFVRCMAIDCGDKKITVNAVAPGGIKTDMYHAVCKEYIPNGENLTDEEVDEYAKTWSPMDRVGQPMDIAKVVGFLASEDGEWINGKVIGIDGAACM.

NADP(+) is bound by residues I26, D72, N99, and R132. The Proton donor role is filled by S149. Residues Y163, K167, I196, and T198 each coordinate NADP(+). Y163 (proton acceptor) is an active-site residue. Catalysis depends on K167, which acts as the Lowers pKa of active site Tyr.

This sequence belongs to the short-chain dehydrogenases/reductases (SDR) family. In terms of assembly, homotetramer.

The catalysed reaction is scytalone + NADP(+) = naphthalene-1,3,6,8-tetrol + NADPH + H(+). It participates in pigment biosynthesis; melanin biosynthesis. Functionally, probable tetrahydroxynaphthalene reductase; part of the gene cluster 29 that mediates the biosynthesis dihydroxynaphthalene (DHN)-melanin, a bluish-green pigment and a structural component of the conidial wall. Catalyzes the NADPH-dependent reduction of 1,3,6,8-tetrahydroxynaphthalene (T4HN) into (+)-scytalone. The protein is Probable tetrahydroxynaphthalene reductase MYCGRDRAFT_87994 of Zymoseptoria tritici (strain CBS 115943 / IPO323) (Speckled leaf blotch fungus).